The following is an 80-amino-acid chain: Small membrane A-kinase anchor protein (80 aa).

Gly-2 carries the N-myristoyl glycine lipid modification.

The protein belongs to the small membrane AKAP family. In terms of processing, may be palmitoylated at Cys-3.

The protein localises to the cell membrane. Functionally, binds to type I regulatory subunits of protein kinase A and may anchor/target them to the plasma membrane. The chain is Small membrane A-kinase anchor protein from Tetraodon nigroviridis (Spotted green pufferfish).